We begin with the raw amino-acid sequence, 444 residues long: Trimethylamine monooxygenase (444 aa).

Residues Cys-12, Glu-37, Gln-39, Leu-45, and Trp-46 each contribute to the FAD site. NADP(+) is bound by residues Trp-70 and Asn-72. 2 residues coordinate FAD: Asn-72 and Val-125. Residues Tyr-170, Ser-202, Ser-203, Ser-205, Arg-226, His-227, and Asn-288 each contribute to the NADP(+) site. FAD is bound by residues Gln-315 and Thr-318. Residue Arg-409 coordinates NADP(+).

The protein belongs to the FMO family. In terms of assembly, homodimer. FAD serves as cofactor.

It carries out the reaction trimethylamine + NADPH + O2 = trimethylamine N-oxide + NADP(+) + H2O. Functionally, catalyzes the oxidation of trimethylamine (TMA) to produce trimethylamine N-oxide (TMAO). In vitro, has a broad substrate specificity, oxidizing many nitrogen- and sulfur-containing compounds, including dimethylamine (DMA), dimethylsulfide (DMS), dimethylsulfoxide (DMSO) and methimazole. TMA shows the highest affinity. This Pelagibacter sp. (strain HTCC7211) protein is Trimethylamine monooxygenase.